The following is a 435-amino-acid chain: S-locus-specific glycoprotein BS29-2 (435 aa).

The signal sequence occupies residues 1-30; sequence MKGVGKPYENSHTSFLLVFFVLTLFSPAFS. Residues 33–155 form the Bulb-type lectin domain; that stretch reads TLSSIESLKI…NKNDRSGFLW (123 aa). 5 N-linked (GlcNAc...) asparagine glycosylation sites follow: N113, N120, N244, N260, and N389. Residues 350 to 430 form the PAN domain; that stretch reads CSGDGFTRMK…NGQDLYVRLA (81 aa). Disulfide bonds link C380–C405 and C388–C390.

Stigma.

Functionally, involved in sporophytic self-incompatibility system (the inability of flowering plants to achieve self-fertilization). In Brassica oleracea var. alboglabra (Chinese kale), this protein is S-locus-specific glycoprotein BS29-2 (SLSG).